A 1065-amino-acid chain; its full sequence is Bifunctional cytochrome P450/NADPH--P450 reductase (1065 aa).

A cytochrome P450 region spans residues 1–479 (MEKKVSAIPQ…EDKLKNDEIK (479 aa)). Cysteine 405 is a heme binding site. The NADPH--P450 reductase stretch occupies residues 480–1065 (QHVQKTPSII…RYGKDVWAGI (586 aa)). Residues 496 to 635 (LLVLYGSDTG…QLEQWKQNMW (140 aa)) form the Flavodoxin-like domain. Residues 502 to 507 (SDTGVA), 549 to 552 (SYNG), 583 to 585 (CGD), and 591 to 593 (TYQ) each bind FMN. An FAD-binding FR-type domain is found at 674-907 (YEAVYASILE…RTPQSNFELP (234 aa)).

It in the N-terminal section; belongs to the cytochrome P450 family. Heme serves as cofactor. It depends on FAD as a cofactor. FMN is required as a cofactor.

It catalyses the reaction 2 oxidized [cytochrome P450] + NADPH = 2 reduced [cytochrome P450] + NADP(+) + H(+). The enzyme catalyses an organic molecule + reduced [NADPH--hemoprotein reductase] + O2 = an alcohol + oxidized [NADPH--hemoprotein reductase] + H2O + H(+). Its function is as follows. Functions as a fatty acid monooxygenase. Catalyzes hydroxylation of fatty acids at omega-1, omega-2 and omega-3 positions, yielding primarily omega-1 and omega-2 hydroxylated products. Metabolizes unsaturated and saturated fatty acids as well as N-acylamino acids. Has a preference for long-chain unsaturated fatty acids over saturated fatty acids. Shows activity toward saturated fatty acids with a chain length of 9-18 carbons with preference for longer fatty acids. Also displays a NADPH-dependent reductase activity in the C-terminal domain, which allows electron transfer from NADPH to the heme iron of the cytochrome P450 N-terminal domain. The polypeptide is Bifunctional cytochrome P450/NADPH--P450 reductase (Bacillus cereus (strain ATCC 14579 / DSM 31 / CCUG 7414 / JCM 2152 / NBRC 15305 / NCIMB 9373 / NCTC 2599 / NRRL B-3711)).